A 132-amino-acid polypeptide reads, in one-letter code: UPF0212 protein PYRAB08340 (132 aa).

It belongs to the UPF0212 family.

The sequence is that of UPF0212 protein PYRAB08340 from Pyrococcus abyssi (strain GE5 / Orsay).